Reading from the N-terminus, the 92-residue chain is Small nuclear ribonucleoprotein E (92 aa).

In terms of domain architecture, Sm spans 18 to 92 (INLIFRYLQN…NITLLQSVSN (75 aa)).

It belongs to the snRNP Sm proteins family. In terms of assembly, core component of the spliceosomal U1, U2, U4 and U5 small nuclear ribonucleoproteins (snRNPs), the building blocks of the spliceosome. Most spliceosomal snRNPs contain a common set of Sm proteins, snrpb, snrpd1, snrpd2, snrpd3, snrpe, snrpf and snrpg that assemble in a heptameric protein ring on the Sm site of the small nuclear RNA to form the core snRNP. Component of the U1 snRNP. The U1 snRNP is composed of the U1 snRNA and the 7 core Sm proteins snrpb, snrpd1, snrpd2, snrpd3, snrpe, snrpf and snrpg, and at least three U1 snRNP-specific proteins snrnp70/u1-70k, snrpa/u1-a and snrpc/u1-c. Component of the U4/U6-U5 tri-snRNP complex composed of the U4, U6 and U5 snRNAs and at least prpf3, prpf4, prpf6, prpf8, prpf31, snrnp200, txnl4a, snrnp40, snrpb, snrpd1, snrpd2, snrpd3, snrpe, snrpf, snrpg, ddx23, cd2bp2, ppih, snu13, eftud2, sart1 and usp39, plus lsm2, lsm3, lsm4, lsm5, lsm6, lsm7 and lsm8. Component of the U7 snRNP complex, or U7 Sm protein core complex, that is composed of the U7 snRNA and at least lsm10, lsm11, snrpb, snrpd3, snrpe, snrpf and snrpg; the complex does not contain snrpd1 and snrpd2. Component of the minor spliceosome, which splices U12-type introns. Part of the SMN-Sm complex that contains smn1, gemin2/sip1, ddx20/gemin3, gemin4, gemin5, gemin6, gemin7, gemin8, strap/unrip and the Sm proteins snrpb, snrpd1, snrpd2, snrpd3, snrpe, snrpf and snrpg; catalyzes core snRNPs assembly. Forms a 6S pICln-Sm complex composed of clns1a/pICln, snrpd1, snrpd2, snrpe, snrpf and snrpg; ring-like structure where clns1a/pICln mimics additional Sm proteins and which is unable to assemble into the core snRNP.

Its subcellular location is the cytoplasm. The protein localises to the cytosol. It is found in the nucleus. Plays a role in pre-mRNA splicing as a core component of the spliceosomal U1, U2, U4 and U5 small nuclear ribonucleoproteins (snRNPs), the building blocks of the spliceosome. Component of both the pre-catalytic spliceosome B complex and activated spliceosome C complexes. As a component of the minor spliceosome, involved in the splicing of U12-type introns in pre-mRNAs. As part of the U7 snRNP it is involved in histone 3'-end processing. The chain is Small nuclear ribonucleoprotein E (snrpe) from Danio rerio (Zebrafish).